We begin with the raw amino-acid sequence, 334 residues long: Transcription initiation factor IIB (334 aa).

The segment at 34 to 65 (TETVCPECGGRQLVHDYERAELVCQSCGLVID) adopts a TFIIB-type zinc-finger fold. Residues Cys38, Cys41, Cys57, and Cys60 each contribute to the Zn(2+) site. 2 repeat units span residues 151–234 (SELD…SREL) and 245–326 (DYVP…ELAE).

Belongs to the TFIIB family.

Its function is as follows. Stabilizes TBP binding to an archaeal box-A promoter. Also responsible for recruiting RNA polymerase II to the pre-initiation complex (DNA-TBP-TFIIB). The sequence is that of Transcription initiation factor IIB from Methanoregula boonei (strain DSM 21154 / JCM 14090 / 6A8).